Reading from the N-terminus, the 484-residue chain is Protein nucleotidyltransferase YdiU (484 aa).

ATP is bound by residues Gly-81, Gly-83, Arg-84, Lys-103, Asp-115, Gly-116, Arg-166, and Arg-173. Residue Asp-244 is the Proton acceptor of the active site. Residues Asn-245 and Asp-254 each coordinate Mg(2+). Asp-254 is an ATP binding site.

This sequence belongs to the SELO family. Mg(2+) serves as cofactor. The cofactor is Mn(2+).

The enzyme catalyses L-seryl-[protein] + ATP = 3-O-(5'-adenylyl)-L-seryl-[protein] + diphosphate. The catalysed reaction is L-threonyl-[protein] + ATP = 3-O-(5'-adenylyl)-L-threonyl-[protein] + diphosphate. It catalyses the reaction L-tyrosyl-[protein] + ATP = O-(5'-adenylyl)-L-tyrosyl-[protein] + diphosphate. It carries out the reaction L-histidyl-[protein] + UTP = N(tele)-(5'-uridylyl)-L-histidyl-[protein] + diphosphate. The enzyme catalyses L-seryl-[protein] + UTP = O-(5'-uridylyl)-L-seryl-[protein] + diphosphate. The catalysed reaction is L-tyrosyl-[protein] + UTP = O-(5'-uridylyl)-L-tyrosyl-[protein] + diphosphate. Functionally, nucleotidyltransferase involved in the post-translational modification of proteins. It can catalyze the addition of adenosine monophosphate (AMP) or uridine monophosphate (UMP) to a protein, resulting in modifications known as AMPylation and UMPylation. The polypeptide is Protein nucleotidyltransferase YdiU (Shewanella putrefaciens (strain CN-32 / ATCC BAA-453)).